The sequence spans 724 residues: 1,3-beta-galactosyl-N-acetylhexosamine phosphorylase Cphy3030 (724 aa).

Aspartate 316 functions as the Proton donor in the catalytic mechanism.

This sequence belongs to the glycoside hydrolase 112 family.

It catalyses the reaction beta-D-galactosyl-(1-&gt;3)-N-acetyl-D-glucosamine + phosphate = alpha-D-galactose 1-phosphate + N-acetyl-D-glucosamine. Reversibly phosphorolyzes beta-D-galactopyranosyl-(1-&gt;3)-N-acetyl-D-glucosamine to form alpha-D-galactopyranose 1-phosphate and acetyl-D-glucosamine. Active towards galacto-N-biose and lacto-N-biose. Does not phosphorolyze galacto-N-tetraose or lacto-N-tetraose. In the reverse reaction has activity toward N-acetyl-D-glucosamine and N-acetyl-D-galactosamine, but not L-rhamnose, D-glucose or D-galactose. The protein is 1,3-beta-galactosyl-N-acetylhexosamine phosphorylase Cphy3030 of Lachnoclostridium phytofermentans (strain ATCC 700394 / DSM 18823 / ISDg) (Clostridium phytofermentans).